Reading from the N-terminus, the 917-residue chain is Hexokinase-1 (917 aa).

At methionine 1 the chain carries N-acetylmethionine. Residues 1 to 10 (MIAAQLLAYY) form a mitochondrial-binding peptide (MBP) region. Hexokinase domains follow at residues 16–458 (DDQV…MVTA) and 464–906 (AEQH…LITA). Residues arginine 30 and 84–89 (DLGGSS) each bind ATP. Residues 73–207 (DGSEKGDFIA…DYDANIVAVV (135 aa)) are hexokinase small subdomain 1. 84-91 (DLGGSSFR) serves as a coordination point for D-glucose 6-phosphate. D-glucose contacts are provided by residues serine 155, 172 to 173 (TK), and 208 to 209 (ND). The segment at 208 to 447 (NDTVGTMMTC…SDVRFLLSES (240 aa)) is hexokinase large subdomain 1. Residues aspartate 209 and threonine 232 each coordinate D-glucose 6-phosphate. Residues asparagine 235, glutamate 260, and 291–294 (QLFE) contribute to the D-glucose site. Serine 337 is modified (phosphoserine). Asparagine 345 serves as a coordination point for ATP. 413-415 (DGS) is a binding site for D-glucose 6-phosphate. Residue 425-426 (RR) coordinates ATP. D-glucose 6-phosphate is bound by residues serine 449 and 532 to 536 (DLGGT). The hexokinase small subdomain 2 stretch occupies residues 521 to 655 (DGTENGDFLA…EFDLDVVAVV (135 aa)). 532-537 (DLGGTN) is an ATP binding site. D-glucose is bound by residues 603-604 (SF), 620-621 (TK), and 656-657 (ND). Positions 656–895 (NDTVGTMMTC…CNVSFLLSED (240 aa)) are hexokinase large subdomain 2. Residues aspartate 657 and threonine 680 each contribute to the D-glucose 6-phosphate site. Threonine 680 serves as a coordination point for ATP. Residues 682–683 (SN), glutamate 708, and glutamate 742 each bind D-glucose. Residues 747–748 (GM), 784–788 (TKFLS), and 863–867 (TLYKL) contribute to the ATP site. D-glucose 6-phosphate contacts are provided by residues 861–863 (DGT) and serine 897.

Belongs to the hexokinase family. As to quaternary structure, monomer. Interacts with RABL2/RABL2A; binds preferentially to GTP-bound RABL2. Interacts with VDAC1. The HK1-VDAC1 complex interacts with ATF2. Interacts (via N-terminal spermatogenic cell-specific region) with PFKM (via C-terminus). Interacts with SMAD5. As to expression, isoform 2: Erythrocyte specific. Isoform 3: Testis-specific. Isoform 4: Testis-specific.

Its subcellular location is the mitochondrion outer membrane. It is found in the cytoplasm. The protein localises to the cytosol. The catalysed reaction is a D-hexose + ATP = a D-hexose 6-phosphate + ADP + H(+). It catalyses the reaction D-fructose + ATP = D-fructose 6-phosphate + ADP + H(+). It carries out the reaction D-glucose + ATP = D-glucose 6-phosphate + ADP + H(+). The enzyme catalyses D-mannose + ATP = D-mannose 6-phosphate + ADP + H(+). The catalysed reaction is D-glucosamine + ATP = D-glucosamine 6-phosphate + ADP + H(+). It functions in the pathway carbohydrate metabolism; hexose metabolism. Its pathway is carbohydrate degradation; glycolysis; D-glyceraldehyde 3-phosphate and glycerone phosphate from D-glucose: step 1/4. Hexokinase is an allosteric enzyme inhibited by its product D-glucose 6-phosphate. Hexokinase activity is inhibited by N-acetyl-D-glucosamine. Catalyzes the phosphorylation of various hexoses, such as D-glucose, D-glucosamine, D-fructose, D-mannose and 2-deoxy-D-glucose, to hexose 6-phosphate (D-glucose 6-phosphate, D-glucosamine 6-phosphate, D-fructose 6-phosphate, D-mannose 6-phosphate and 2-deoxy-D-glucose 6-phosphate, respectively). Does not phosphorylate N-acetyl-D-glucosamine. Mediates the initial step of glycolysis by catalyzing phosphorylation of D-glucose to D-glucose 6-phosphate. Involved in innate immunity and inflammation by acting as a pattern recognition receptor for bacterial peptidoglycan. When released in the cytosol, N-acetyl-D-glucosamine component of bacterial peptidoglycan inhibits the hexokinase activity of HK1 and causes its dissociation from mitochondrial outer membrane, thereby activating the NLRP3 inflammasome. The sequence is that of Hexokinase-1 from Homo sapiens (Human).